The chain runs to 550 residues: Arginine--tRNA ligase (550 aa).

The 'HIGH' region signature appears at 123–133 (ANPTGYLHIAH).

Belongs to the class-I aminoacyl-tRNA synthetase family. Monomer.

The protein localises to the cytoplasm. The enzyme catalyses tRNA(Arg) + L-arginine + ATP = L-arginyl-tRNA(Arg) + AMP + diphosphate. In Ureaplasma parvum serovar 3 (strain ATCC 27815 / 27 / NCTC 11736), this protein is Arginine--tRNA ligase.